The following is a 186-amino-acid chain: Mitoferrin-2A (186 aa).

The stretch at 75-163 (SNVTTHMLAG…FACYEKLKKT (89 aa)) is one Solcar repeat. A run of 3 helical transmembrane segments spans residues 77-96 (VTTH…CLMY), 137-157 (RGLN…FACY), and 172-185 (GNSH…YSCP).

Belongs to the mitochondrial carrier (TC 2.A.29) family.

It localises to the mitochondrion inner membrane. It carries out the reaction Fe(2+)(in) = Fe(2+)(out). Mitochondrial iron transporter that mediates iron uptake. Probably required for heme synthesis of hemoproteins and Fe-S cluster assembly in non-erythroid cells. The sequence is that of Mitoferrin-2A (slc25a28-a) from Xenopus laevis (African clawed frog).